The following is a 110-amino-acid chain: Integration host factor subunit beta (110 aa).

The protein belongs to the bacterial histone-like protein family. As to quaternary structure, heterodimer of an alpha and a beta chain.

Its function is as follows. This protein is one of the two subunits of integration host factor, a specific DNA-binding protein that functions in genetic recombination as well as in transcriptional and translational control. The chain is Integration host factor subunit beta from Parvibaculum lavamentivorans (strain DS-1 / DSM 13023 / NCIMB 13966).